The chain runs to 167 residues: MLAIALLVLLCASASANSIQSRSSSYSGEYGGKGGKRFSHSGNQLDGPITAIRIRVNRYYIIGLQVRYGTVWSDYVGGNQGDLEEIFLHPGESVIQVSGKYKSYVKQLIFVTDKGRYLPFGKDSGTSFNAVPLHPNTVLRFISGRSGSAIDAISLHWDTYPSHCNTC.

A signal peptide spans 1-16 (MLAIALLVLLCASASA). One can recognise a Jacalin-type lectin domain in the interval 24–159 (SSYSGEYGGK…IDAISLHWDT (136 aa)).

Belongs to the jacalin lectin family. Expressed in pancreas, colon, duodenum, and much less in stomach.

The protein localises to the secreted. The protein resides in the extracellular space. It localises to the extracellular matrix. Its subcellular location is the zymogen granule lumen. It is found in the golgi apparatus lumen. May play a role in protein trafficking. May act as a linker molecule between the submembranous matrix on the luminal side of zymogen granule membrane (ZGM) and aggregated secretory proteins during granule formation in the TGN. In Rattus norvegicus (Rat), this protein is Zymogen granule membrane protein 16 (Zg16).